We begin with the raw amino-acid sequence, 224 residues long: MAEILRAENIKKVIRGYEILKGISLSVKKGEFVSIIGASGSGKSTLLYILGLLDAPTEGKVFLEGKEVDYTNEKELSLLRNRKLGFVFQFHYLIPELTALENVIVPMLKMGKPKKEAKERGEYLLSELGLGDKLSRKPYELSGGEQQRVAIARALANEPILLFADEPTGNLDSANTKRVMDIFLKINEGGTSIVMVTHERELAELTHRTLEMKDGKVVGEITRV.

The ABC transporter domain occupies 5–224; it reads LRAENIKKVI…GKVVGEITRV (220 aa). ATP is bound at residue 37 to 44; it reads GASGSGKS.

Belongs to the ABC transporter superfamily. Lipoprotein translocase (TC 3.A.1.125) family. In terms of assembly, the complex is composed of two ATP-binding proteins (LolD) and two transmembrane proteins (LolC and LolE).

The protein resides in the cell inner membrane. Its function is as follows. Part of the ABC transporter complex LolCDE involved in the translocation of mature outer membrane-directed lipoproteins, from the inner membrane to the periplasmic chaperone, LolA. Responsible for the formation of the LolA-lipoprotein complex in an ATP-dependent manner. This chain is Lipoprotein-releasing system ATP-binding protein LolD, found in Aquifex aeolicus (strain VF5).